A 600-amino-acid polypeptide reads, in one-letter code: Arginine--tRNA ligase (600 aa).

The 'HIGH' region signature appears at 132 to 142; that stretch reads ANPTGPLHVGH.

It belongs to the class-I aminoacyl-tRNA synthetase family. Monomer.

The protein localises to the cytoplasm. It catalyses the reaction tRNA(Arg) + L-arginine + ATP = L-arginyl-tRNA(Arg) + AMP + diphosphate. The sequence is that of Arginine--tRNA ligase from Ralstonia nicotianae (strain ATCC BAA-1114 / GMI1000) (Ralstonia solanacearum).